The chain runs to 648 residues: 1-deoxy-D-xylulose-5-phosphate synthase (648 aa).

Thiamine diphosphate contacts are provided by residues H79 and 120 to 122 (GHA). Position 152 (D152) interacts with Mg(2+). Residues 153-154 (GS), N181, F293, and E377 each bind thiamine diphosphate. N181 lines the Mg(2+) pocket.

It belongs to the transketolase family. DXPS subfamily. Homodimer. It depends on Mg(2+) as a cofactor. Thiamine diphosphate is required as a cofactor.

It catalyses the reaction D-glyceraldehyde 3-phosphate + pyruvate + H(+) = 1-deoxy-D-xylulose 5-phosphate + CO2. It functions in the pathway metabolic intermediate biosynthesis; 1-deoxy-D-xylulose 5-phosphate biosynthesis; 1-deoxy-D-xylulose 5-phosphate from D-glyceraldehyde 3-phosphate and pyruvate: step 1/1. Its function is as follows. Catalyzes the acyloin condensation reaction between C atoms 2 and 3 of pyruvate and glyceraldehyde 3-phosphate to yield 1-deoxy-D-xylulose-5-phosphate (DXP). The protein is 1-deoxy-D-xylulose-5-phosphate synthase of Bacteroides fragilis (strain ATCC 25285 / DSM 2151 / CCUG 4856 / JCM 11019 / LMG 10263 / NCTC 9343 / Onslow / VPI 2553 / EN-2).